We begin with the raw amino-acid sequence, 148 residues long: Cofilin/actin-depolymerizing factor homolog (148 aa).

The 140-residue stretch at 4–143 (GVTVSDVCKT…SREAVEEKLR (140 aa)) folds into the ADF-H domain. The short motif at 19-23 (KKDKK) is the Nuclear localization signal element.

The protein belongs to the actin-binding proteins ADF family. Post-translationally, phosphorylated in vitro by protein kinase LIMK1. Phosphorylation is required for inactivation of tsr and for cell proliferation and axon growth. Phosphorylation is negatively regulated by the panthothenate kinase fbl which catalyzes the first step in the conversion of panthothenic acid to coenzyme A. Dephosphorylated by protein phosphatase ssh which activates tsr.

It localises to the cytoplasm. The protein resides in the cytoskeleton. It is found in the nucleus matrix. Functionally, exhibits F-actin depolymerizing activity and regulates actin cytoskeleton dynamics. Required for cytokinesis in both mitotic and meiotic cells and for aster migration and separation. Promotes cell motility during ovary development and oogenesis. During larval development, required for the cell rearrangement needed for formation of terminal filaments which are stacks of somatic cells that are important for the initiation of ovarioles. Also required for border cell migration during oogenesis. During border cell migration, required for actin turnover and lamellipodial protrusion. Required for the establishment of planar cell polarity (PCP) where cells adopt a uniform orientation within the plane of an epithelium. During establishment of PCP, required for the redistribution of the PCP core proteins fz and stan/fmi to the proximodistal cell boundary. During pupal development, required for elongation of the retinal cell body and for rhabdomere morphogenesis. Required for mushroom body neuroblast proliferation and axon growth. Plays a role in the positive regulation of protein secretion. Plays a role in the regulation of nuclear localization of actin. Required for the maintenance of epithelial integrity by controlling cell junctions and is also necessary for cell survival and tissue growth through regulation of JNK and yki signaling. The sequence is that of Cofilin/actin-depolymerizing factor homolog from Drosophila melanogaster (Fruit fly).